Consider the following 345-residue polypeptide: Putative F-box protein At3g17265 (345 aa).

The F-box domain maps to 1–46; sequence MMFAYLPPDLESEILSRVPATFLKELQTTCKRWYALFRDPIFVKKN.

The polypeptide is Putative F-box protein At3g17265 (Arabidopsis thaliana (Mouse-ear cress)).